The chain runs to 126 residues: MRTNLRMAEKGADCLLRLIVYQMFEPARMLLYIFKAKNIAEKPFGESVKSYDFLSPLSPILCKNKLSVLYAHKPLPFKLLNHPPHRRNSYLLPCPPLQPSTFLSEYSPLFLKSITPPLTLRRLQSL.

This is an uncharacterized protein from Archaeoglobus fulgidus (strain ATCC 49558 / DSM 4304 / JCM 9628 / NBRC 100126 / VC-16).